The sequence spans 208 residues: MSAGGDFGNPLRKFKLVFLGEQSVGKTSLITRFMYDSFDNTYQATIGIDFLSKTMYLEDRTIRLQLWDTAGQERFRSLIPSYIRDSAAAVVVYDITNVNSFQQTTKWIDDVRTERGSDVIIMLVGNKTDLADKRQVSIEEGERKAKELNVMFIETSAKAGYNVKQLFRRVAAALPGMESTQDKSREDMIDIKLEKPQEQPVSEGGCSC.

Serine 2 is subject to N-acetylserine. Serine 23, valine 24, glycine 25, lysine 26, threonine 27, serine 28, aspartate 39, asparagine 40, tyrosine 42, and threonine 45 together coordinate GTP. Residue threonine 27 coordinates Mg(2+). The short motif at 32–50 (RFMYDSFDNTYQATIGIDF) is the Switch 1 element. Mg(2+) contacts are provided by threonine 45 and aspartate 68. The Switch 2 signature appears at 69–88 (TAGQERFRSLIPSYIRDSAA). GTP is bound by residues glycine 71, asparagine 126, lysine 127, aspartate 129, serine 156, alanine 157, and lysine 158. S-geranylgeranyl cysteine attachment occurs at residues cysteine 206 and cysteine 208. The residue at position 208 (cysteine 208) is a Cysteine methyl ester.

This sequence belongs to the small GTPase superfamily. Rab family. It depends on Mg(2+) as a cofactor.

It is found in the golgi apparatus membrane. It carries out the reaction GTP + H2O = GDP + phosphate + H(+). Regulated by guanine nucleotide exchange factors (GEFs) which promote the exchange of bound GDP for free GTP. Regulated by GTPase activating proteins (GAPs) which increase the GTP hydrolysis activity. Inhibited by GDP dissociation inhibitors (GDIs). The small GTPases Rab are key regulators of intracellular membrane trafficking, from the formation of transport vesicles to their fusion with membranes. Rabs cycle between an inactive GDP-bound form and an active GTP-bound form that is able to recruit to membranes different sets of downstream effectors directly responsible for vesicle formation, movement, tethering and fusion. RAB6A acts as a regulator of COPI-independent retrograde transport from the Golgi apparatus towards the endoplasmic reticulum (ER). The polypeptide is Ras-related protein Rab-6A (RAB6A) (Gallus gallus (Chicken)).